Consider the following 225-residue polypeptide: MMYHIPGVLSPQDVAHFREQLEQAEWVDGRVTTGAQGAQVKNNQQVDTRSALYAALQNEVLNAVNQHALFFAAALPRTLSTPLFNRYQNNETYGFHVDGAVRSHPQNGWMRTDLSATLFLSDPQSYDGGELVVNDTFGQHRVKLPAGDLVLYPSSSLHCVTPVTRGVRVASFMWIQSMIRDDKKRAMLFELDKNIQSLKSRYGENEEILSLLNLYHNLLREWSEI.

The 100-residue stretch at 78–177 (TLSTPLFNRY…RVASFMWIQS (100 aa)) folds into the Fe2OG dioxygenase domain. Residues His-96, Asp-98, and His-158 each coordinate Fe cation. Arg-168 contacts 2-oxoglutarate.

Fe(2+) serves as cofactor. L-ascorbate is required as a cofactor.

This Shigella flexneri serotype 5b (strain 8401) protein is PKHD-type hydroxylase YbiX.